Reading from the N-terminus, the 412-residue chain is Putative competence-damage inducible protein (412 aa).

This sequence belongs to the CinA family.

The protein is Putative competence-damage inducible protein of Bacillus cereus (strain AH820).